We begin with the raw amino-acid sequence, 141 residues long: Large ribosomal subunit protein uL16 (141 aa).

The interval 1-21 is disordered; the sequence is MLMPKRVKYRKQQRGHNRGMA.

The protein belongs to the universal ribosomal protein uL16 family. In terms of assembly, part of the 50S ribosomal subunit.

Functionally, binds 23S rRNA and is also seen to make contacts with the A and possibly P site tRNAs. This is Large ribosomal subunit protein uL16 from Roseiflexus sp. (strain RS-1).